The following is a 157-amino-acid chain: Small ribosomal subunit protein uS17 (157 aa).

The protein belongs to the universal ribosomal protein uS17 family.

The sequence is that of Small ribosomal subunit protein uS17 (RPS11) from Dunaliella tertiolecta (Green alga).